We begin with the raw amino-acid sequence, 185 residues long: Elongation factor P (185 aa).

This sequence belongs to the elongation factor P family.

It is found in the cytoplasm. It functions in the pathway protein biosynthesis; polypeptide chain elongation. Functionally, involved in peptide bond synthesis. Stimulates efficient translation and peptide-bond synthesis on native or reconstituted 70S ribosomes in vitro. Probably functions indirectly by altering the affinity of the ribosome for aminoacyl-tRNA, thus increasing their reactivity as acceptors for peptidyl transferase. In Picosynechococcus sp. (strain ATCC 27264 / PCC 7002 / PR-6) (Agmenellum quadruplicatum), this protein is Elongation factor P.